The chain runs to 99 residues: MIAIIETGGKQILVKEGETIFIEKIEGAEGSKVTFDKVLLLDNKIGKPYVESAKVIGEIQKQGKAKKIVVYRHNAKSTHKRKLGHRQPYTRVKITGIVG.

Belongs to the bacterial ribosomal protein bL21 family. Part of the 50S ribosomal subunit. Contacts protein L20.

In terms of biological role, this protein binds to 23S rRNA in the presence of protein L20. This is Large ribosomal subunit protein bL21 from Mycoplasmopsis agalactiae (strain NCTC 10123 / CIP 59.7 / PG2) (Mycoplasma agalactiae).